We begin with the raw amino-acid sequence, 204 residues long: Urease accessory protein UreG (204 aa).

Residue 11–18 (GPVGAGKH) coordinates GTP.

This sequence belongs to the SIMIBI class G3E GTPase family. UreG subfamily. In terms of assembly, homodimer. UreD, UreF and UreG form a complex that acts as a GTP-hydrolysis-dependent molecular chaperone, activating the urease apoprotein by helping to assemble the nickel containing metallocenter of UreC. The UreE protein probably delivers the nickel.

It is found in the cytoplasm. Its function is as follows. Facilitates the functional incorporation of the urease nickel metallocenter. This process requires GTP hydrolysis, probably effectuated by UreG. The sequence is that of Urease accessory protein UreG from Staphylococcus xylosus.